The primary structure comprises 462 residues: A-type ATP synthase subunit B (462 aa).

It belongs to the ATPase alpha/beta chains family. As to quaternary structure, has multiple subunits with at least A(3), B(3), C, D, E, F, H, I and proteolipid K(x).

The protein localises to the cell membrane. Functionally, component of the A-type ATP synthase that produces ATP from ADP in the presence of a proton gradient across the membrane. The B chain is a regulatory subunit. This Methanococcus maripaludis (strain C5 / ATCC BAA-1333) protein is A-type ATP synthase subunit B.